A 484-amino-acid polypeptide reads, in one-letter code: Cysteine desulfurase, mitochondrial (484 aa).

Over residues 29–42 (LATSASTSSSTTTS) the composition is skewed to low complexity. Positions 29–69 (LATSASTSSSTTTSNAETGELHVSTPLDSPSVHPPDGSSIS) are disordered. Pyridoxal 5'-phosphate-binding positions include 153 to 154 (AT), Asn233, Gln261, and 281 to 283 (SSH). The residue at position 284 (Lys284) is an N6-(pyridoxal phosphate)lysine. Thr321 provides a ligand contact to pyridoxal 5'-phosphate. The active-site Cysteine persulfide intermediate is the Cys408. Cys408 contacts [2Fe-2S] cluster.

This sequence belongs to the class-V pyridoxal-phosphate-dependent aminotransferase family. NifS/IscS subfamily. Requires pyridoxal 5'-phosphate as cofactor.

The protein resides in the mitochondrion. The enzyme catalyses (sulfur carrier)-H + L-cysteine = (sulfur carrier)-SH + L-alanine. Functionally, catalyzes the removal of elemental sulfur from cysteine to produce alanine. It supplies the inorganic sulfur for iron-sulfur (Fe-S) clusters. Plays a role in both tRNA-processing and mitochondrial metabolism. Involved in the 2-thio-modification of both 5-carboxymethylaminomethyl-2-thiouridine in mitochondrial tRNAs and 5-methoxycarbonylmethyl-2-thiouridine (mcm5s2U) in cytoplasmic tRNAs. The sequence is that of Cysteine desulfurase, mitochondrial from Candida maltosa (Yeast).